A 221-amino-acid polypeptide reads, in one-letter code: GTP-binding nuclear protein Ran-1 (221 aa).

One can recognise a Small GTPase Ran-type domain in the interval 10 to 174 (DYPSFKLVIV…LYLARKLAGD (165 aa)). Residue 21–28 (DGGTGKTT) participates in GTP binding. The segment at 40–48 (KKYEPTIGV) is switch-I. Residues Gly71, 125–128 (NKVD), and 153–155 (SAK) contribute to the GTP site. The switch-II stretch occupies residues 71–87 (GQEKFGGLRDGYYIHGQ).

The protein belongs to the small GTPase superfamily. Ran family. As to quaternary structure, found in a nuclear export complex with RanGTP, exportin and pre-miRNA. Interacts with RANBP1A and RANBP1B. Interacts with TRN1. Interacts with ATX1. Interacts with KPNB1. Binds to XPO1. Interacts with MOS14. Binds to NTF2B.

It localises to the nucleus. GTP-binding protein involved in nucleocytoplasmic transport. Required for the import of protein into the nucleus and also for RNA export. Involved in chromatin condensation and control of cell cycle. The protein is GTP-binding nuclear protein Ran-1 (RAN1) of Arabidopsis thaliana (Mouse-ear cress).